We begin with the raw amino-acid sequence, 657 residues long: Transketolase (657 aa).

Residue histidine 31 participates in substrate binding. Residues histidine 71 and 120–122 contribute to the thiamine diphosphate site; that span reads GPL. Residue aspartate 158 coordinates Mg(2+). Residues glycine 159 and asparagine 188 each contribute to the thiamine diphosphate site. 2 residues coordinate Mg(2+): asparagine 188 and isoleucine 190. Residues histidine 262, arginine 354, and serine 381 each coordinate substrate. Histidine 262 contacts thiamine diphosphate. The Proton donor role is filled by glutamate 408. Phenylalanine 434 contributes to the thiamine diphosphate binding site. Substrate-binding residues include histidine 458, aspartate 466, and arginine 517.

This sequence belongs to the transketolase family. As to quaternary structure, homodimer. The cofactor is Mg(2+). It depends on Ca(2+) as a cofactor. Requires Mn(2+) as cofactor. Co(2+) serves as cofactor. Thiamine diphosphate is required as a cofactor.

It catalyses the reaction D-sedoheptulose 7-phosphate + D-glyceraldehyde 3-phosphate = aldehydo-D-ribose 5-phosphate + D-xylulose 5-phosphate. It participates in carbohydrate biosynthesis; Calvin cycle. It functions in the pathway carbohydrate degradation; pentose phosphate pathway. Catalyzes the transfer of a two-carbon ketol group from a ketose donor to an aldose acceptor, via a covalent intermediate with the cofactor thiamine pyrophosphate. The polypeptide is Transketolase (tklB) (Cereibacter sphaeroides (Rhodobacter sphaeroides)).